A 463-amino-acid chain; its full sequence is Na(+)/H(+) antiporter NhaA 3 (463 aa).

11 helical membrane-spanning segments follow: residues 28-48 (FLAT…AALL), 79-99 (LHHW…GLEI), 114-134 (IAVP…IYFV), 144-164 (GWGI…ALFG), 173-193 (LFLL…VGIF), 196-216 (DHLN…ILGL), 232-252 (LVLW…GVLV), 305-325 (VLHP…NAGV), 344-364 (VAAA…VAAI), 377-397 (YGHL…SLFI), and 413-433 (IGIL…LRVL). Residues 444–463 (TDEPVPRLPPRPWRAPVPAK) form a disordered region. The segment covering 449 to 463 (PRLPPRPWRAPVPAK) has biased composition (pro residues).

Belongs to the NhaA Na(+)/H(+) (TC 2.A.33) antiporter family.

It localises to the cell membrane. The catalysed reaction is Na(+)(in) + 2 H(+)(out) = Na(+)(out) + 2 H(+)(in). Functionally, na(+)/H(+) antiporter that extrudes sodium in exchange for external protons. The protein is Na(+)/H(+) antiporter NhaA 3 of Frankia alni (strain DSM 45986 / CECT 9034 / ACN14a).